Reading from the N-terminus, the 122-residue chain is Large ribosomal subunit protein uL14c (122 aa).

It belongs to the universal ribosomal protein uL14 family. In terms of assembly, part of the 50S ribosomal subunit.

It is found in the plastid. The protein localises to the chloroplast. Its function is as follows. Binds to 23S rRNA. This is Large ribosomal subunit protein uL14c from Oenothera biennis (German evening primrose).